The chain runs to 354 residues: L-lactate dehydrogenase (354 aa).

Residues 73 to 78 (DAVPDK) and R120 contribute to the NAD(+) site. Substrate contacts are provided by R127, N159, and R190. N159 contacts NAD(+). H214 acts as the Proton acceptor in catalysis. T269 contacts substrate. A disordered region spans residues 302–332 (HGIPDGTTSSSACPPRRPRRRPGRREMELTE).

The protein belongs to the LDH/MDH superfamily. LDH family. Homotetramer.

The catalysed reaction is (S)-lactate + NAD(+) = pyruvate + NADH + H(+). Its pathway is fermentation; pyruvate fermentation to lactate; (S)-lactate from pyruvate: step 1/1. This is L-lactate dehydrogenase from Zea mays (Maize).